We begin with the raw amino-acid sequence, 248 residues long: PF03932 family protein CutC (248 aa).

This sequence belongs to the CutC family. As to quaternary structure, homodimer.

It localises to the cytoplasm. This is PF03932 family protein CutC from Escherichia coli O7:K1 (strain IAI39 / ExPEC).